The sequence spans 295 residues: 4-hydroxy-tetrahydrodipicolinate synthase (295 aa).

Thr46 is a pyruvate binding site. Tyr134 acts as the Proton donor/acceptor in catalysis. Lys162 functions as the Schiff-base intermediate with substrate in the catalytic mechanism. A pyruvate-binding site is contributed by Val204.

It belongs to the DapA family. In terms of assembly, homotetramer; dimer of dimers.

It is found in the cytoplasm. It carries out the reaction L-aspartate 4-semialdehyde + pyruvate = (2S,4S)-4-hydroxy-2,3,4,5-tetrahydrodipicolinate + H2O + H(+). The protein operates within amino-acid biosynthesis; L-lysine biosynthesis via DAP pathway; (S)-tetrahydrodipicolinate from L-aspartate: step 3/4. Catalyzes the condensation of (S)-aspartate-beta-semialdehyde [(S)-ASA] and pyruvate to 4-hydroxy-tetrahydrodipicolinate (HTPA). This is 4-hydroxy-tetrahydrodipicolinate synthase from Oceanobacillus iheyensis (strain DSM 14371 / CIP 107618 / JCM 11309 / KCTC 3954 / HTE831).